Consider the following 72-residue polypeptide: Translation initiation factor IF-1 (72 aa).

An S1-like domain is found at M1–K72. Y60 bears the Phosphotyrosine mark.

It belongs to the IF-1 family. In terms of assembly, component of the 30S ribosomal translation pre-initiation complex which assembles on the 30S ribosome in the order IF-2 and IF-3, IF-1 and N-formylmethionyl-tRNA(fMet); mRNA recruitment can occur at any time during PIC assembly.

The protein localises to the cytoplasm. Its function is as follows. One of the essential components for the initiation of protein synthesis. Stabilizes the binding of IF-2 and IF-3 on the 30S subunit to which N-formylmethionyl-tRNA(fMet) subsequently binds. Helps modulate mRNA selection, yielding the 30S pre-initiation complex (PIC). Upon addition of the 50S ribosomal subunit IF-1, IF-2 and IF-3 are released leaving the mature 70S translation initiation complex. The protein is Translation initiation factor IF-1 of Bacillus licheniformis (strain ATCC 14580 / DSM 13 / JCM 2505 / CCUG 7422 / NBRC 12200 / NCIMB 9375 / NCTC 10341 / NRRL NRS-1264 / Gibson 46).